The following is a 755-amino-acid chain: Polyribonucleotide nucleotidyltransferase (755 aa).

Residues Asp-527 and Asp-533 each coordinate Mg(2+). Residues 593 to 652 (PRITTIKVPVDKIGEVIGPKGKMINSITEETGANISIEDDGTVFVGAADGASAQAAIDKI) form the KH domain. The region spanning 664–733 (GERFLGTVVK…NRGKISLVPV (70 aa)) is the S1 motif domain. Positions 734–755 (GEEDAAEAPAPAEAQPADAVTQ) are disordered. Over residues 740–755 (EAPAPAEAQPADAVTQ) the composition is skewed to low complexity.

It belongs to the polyribonucleotide nucleotidyltransferase family. The cofactor is Mg(2+).

The protein localises to the cytoplasm. The enzyme catalyses RNA(n+1) + phosphate = RNA(n) + a ribonucleoside 5'-diphosphate. In terms of biological role, involved in mRNA degradation. Catalyzes the phosphorolysis of single-stranded polyribonucleotides processively in the 3'- to 5'-direction. The protein is Polyribonucleotide nucleotidyltransferase of Mycobacteroides abscessus (strain ATCC 19977 / DSM 44196 / CCUG 20993 / CIP 104536 / JCM 13569 / NCTC 13031 / TMC 1543 / L948) (Mycobacterium abscessus).